The primary structure comprises 99 residues: Aspartyl/glutamyl-tRNA(Asn/Gln) amidotransferase subunit C (99 aa).

The protein belongs to the GatC family. In terms of assembly, heterotrimer of A, B and C subunits.

It catalyses the reaction L-glutamyl-tRNA(Gln) + L-glutamine + ATP + H2O = L-glutaminyl-tRNA(Gln) + L-glutamate + ADP + phosphate + H(+). The enzyme catalyses L-aspartyl-tRNA(Asn) + L-glutamine + ATP + H2O = L-asparaginyl-tRNA(Asn) + L-glutamate + ADP + phosphate + 2 H(+). Allows the formation of correctly charged Asn-tRNA(Asn) or Gln-tRNA(Gln) through the transamidation of misacylated Asp-tRNA(Asn) or Glu-tRNA(Gln) in organisms which lack either or both of asparaginyl-tRNA or glutaminyl-tRNA synthetases. The reaction takes place in the presence of glutamine and ATP through an activated phospho-Asp-tRNA(Asn) or phospho-Glu-tRNA(Gln). This is Aspartyl/glutamyl-tRNA(Asn/Gln) amidotransferase subunit C from Bifidobacterium longum (strain NCC 2705).